We begin with the raw amino-acid sequence, 177 residues long: Inner membrane-spanning protein YciB (177 aa).

The next 5 membrane-spanning stretches (helical) occupy residues 23–43 (MFVATGVAIAATAVMVAWAWF), 50–70 (TMQWISLGLIVVLGGATLLLH), 73–93 (HFIMWKPTVLYWVMGAGLLIS), 119–139 (LTWAWSGFFAFMGALNLFVAY), and 149–169 (FKLFGGMGLMLLFVIAQSLFL).

It belongs to the YciB family.

The protein resides in the cell inner membrane. Its function is as follows. Plays a role in cell envelope biogenesis, maintenance of cell envelope integrity and membrane homeostasis. This is Inner membrane-spanning protein YciB from Chromobacterium violaceum (strain ATCC 12472 / DSM 30191 / JCM 1249 / CCUG 213 / NBRC 12614 / NCIMB 9131 / NCTC 9757 / MK).